The following is a 156-amino-acid chain: MNINVTLIGQMGTFLVFWWFVNKVIWPMFANIATERQRKIADGLNMADKAKFAVQEAEHQSQEILSKAKMQAAEIVSRANKEASEMIAQAKEQAQRSSEAEVLQAHVQIEQEKRQVRDELRAQLSHLVIAGAEKVLGREVNDRDHERLLHELTEKF.

The chain crosses the membrane as a helical span at residues 7 to 29 (LIGQMGTFLVFWWFVNKVIWPMF).

It belongs to the ATPase B chain family. As to quaternary structure, F-type ATPases have 2 components, F(1) - the catalytic core - and F(0) - the membrane proton channel. F(1) has five subunits: alpha(3), beta(3), gamma(1), delta(1), epsilon(1). F(0) has three main subunits: a(1), b(2) and c(10-14). The alpha and beta chains form an alternating ring which encloses part of the gamma chain. F(1) is attached to F(0) by a central stalk formed by the gamma and epsilon chains, while a peripheral stalk is formed by the delta and b chains.

The protein localises to the cell inner membrane. Its function is as follows. F(1)F(0) ATP synthase produces ATP from ADP in the presence of a proton or sodium gradient. F-type ATPases consist of two structural domains, F(1) containing the extramembraneous catalytic core and F(0) containing the membrane proton channel, linked together by a central stalk and a peripheral stalk. During catalysis, ATP synthesis in the catalytic domain of F(1) is coupled via a rotary mechanism of the central stalk subunits to proton translocation. Component of the F(0) channel, it forms part of the peripheral stalk, linking F(1) to F(0). The protein is ATP synthase subunit b of Dichelobacter nodosus (strain VCS1703A).